The sequence spans 329 residues: Mas-related G-protein coupled receptor member X2 (329 aa).

Topologically, residues 1–33 (MDPTTPAWGTESTTMDGNDQSLPLLCDKEALIP) are extracellular. The helical transmembrane segment at 34–54 (VFLILFIALVGLVGNGFVLWL) threads the bilayer. At 55 to 63 (LGFRMSRNA) the chain is on the cytoplasmic side. Residues 64 to 84 (FSVYVLSLAGADFLFLCFQII) form a helical membrane-spanning segment. At 85–96 (NCLVYLRDFFCS) the chain is on the extracellular side. A helical membrane pass occupies residues 97-117 (ISINFPSXFTTVMTCAYLAGL). The Cytoplasmic portion of the chain corresponds to 118 to 144 (SMLSTISTERCLSVLWPIWYRCRRPRH). Residues 145-165 (LSAVVCVLLWALSLLLSILEG) traverse the membrane as a helical segment. Residues 166 to 184 (KFCGFLFSDGDFGWCQIFD) lie on the Extracellular side of the membrane. The helical transmembrane segment at 185–205 (FITAAWLIFLFVVLCASSLAL) threads the bilayer. The Cytoplasmic portion of the chain corresponds to 206–228 (LVRILCGSRGLPLTRLYLTILLT). The helical transmembrane segment at 229–249 (VLVFLLCGLPFGIQWFLILGF) threads the bilayer. Residues 250-263 (WNSDVLLCHIHLVS) are Extracellular-facing. The helical transmembrane segment at 264–284 (VVLSSLNSSANPIIYFFVGSF) threads the bilayer. Over 285 to 329 (RKQWRLQQPILKLAFQRALQDTAEVDHSEGCFPQGTSEMSRSSLV) the chain is Cytoplasmic.

Belongs to the G-protein coupled receptor 1 family. Mas subfamily.

It is found in the cell membrane. Mast cell-specific receptor for basic secretagogues, i.e. cationic amphiphilic drugs, as well as endo- or exogenous peptides, consisting of a basic head group and a hydrophobic core. Recognizes and binds small molecules containing a cyclized tetrahydroisoquinoline (THIQ), such as non-steroidal neuromuscular blocking drugs (NMBDs), including tubocurarine and atracurium. In response to these compounds, mediates pseudo-allergic reactions characterized by histamine release, inflammation and airway contraction. The chain is Mas-related G-protein coupled receptor member X2 (MRGPRX2) from Hoolock hoolock (Western hoolock gibbon).